A 508-amino-acid polypeptide reads, in one-letter code: Maturase K (508 aa).

It belongs to the intron maturase 2 family. MatK subfamily.

It localises to the plastid. It is found in the chloroplast. Usually encoded in the trnK tRNA gene intron. Probably assists in splicing its own and other chloroplast group II introns. This Abrus precatorius (Indian licorice) protein is Maturase K.